A 35-amino-acid chain; its full sequence is Cupiennin-1c (35 aa).

Glutamate 35 is subject to Glutamic acid 1-amide.

Expressed by the venom gland.

Its subcellular location is the secreted. Functionally, has antimicrobial activity against E.coli, E.faecalis, P.aeruginosa, and S.aureus. This is Cupiennin-1c from Cupiennius salei (American wandering spider).